The primary structure comprises 205 residues: MTGKFITFEGIDGAGKSTHLAWFAQQLQAKLAPLGKKVVVTREPGGTPLGERLREVLLHERMHLETEALLMFASRREHIAEVIQPALDAGDWVISDRFTDATFAYQGGGRGLAIDRLEALEHWVQQGLQPTKTILFDLAPEIAAARLADARTPDKFEAESAQFFLRTRAEYLRRAAAEPDRFVVLNANRERSDIQKDLENLLATL.

Glycine 10–serine 17 lines the ATP pocket.

The protein belongs to the thymidylate kinase family.

It carries out the reaction dTMP + ATP = dTDP + ADP. Its function is as follows. Phosphorylation of dTMP to form dTDP in both de novo and salvage pathways of dTTP synthesis. This chain is Thymidylate kinase, found in Ralstonia pickettii (strain 12J).